Consider the following 469-residue polypeptide: Carboxypeptidase Q (469 aa).

The N-terminal stretch at 1–19 (MKTLILTLLSLYELQLCCG) is a signal peptide. The propeptide occupies 20–42 (AYNQNIRSQRKFEMIKTEISSYK). 2 N-linked (GlcNAc...) asparagine glycosylation sites follow: Asn-59 and Asn-159. 2 residues coordinate Zn(2+): His-288 and Asp-300. The Nucleophile role is filled by Glu-334. Zn(2+) is bound at residue Glu-335. A glycan (N-linked (GlcNAc...) asparagine) is linked at Asn-351. Asp-362 lines the Zn(2+) pocket. Asn-394 is a glycosylation site (N-linked (GlcNAc...) asparagine). His-432 provides a ligand contact to Zn(2+).

This sequence belongs to the peptidase M28 family. In terms of assembly, homodimer. The monomeric form is inactive while the homodimer is active.

It localises to the endoplasmic reticulum. The protein resides in the golgi apparatus. Its subcellular location is the lysosome. The protein localises to the secreted. In terms of biological role, carboxypeptidase that may play an important role in the hydrolysis of circulating peptides. Catalyzes more efficiently the hydrolysis of dipeptides with unsubstituted terminals into amino acids. The sequence is that of Carboxypeptidase Q (cpq) from Xenopus laevis (African clawed frog).